We begin with the raw amino-acid sequence, 152 residues long: UPF0178 protein YE1167 (152 aa).

It belongs to the UPF0178 family.

The sequence is that of UPF0178 protein YE1167 from Yersinia enterocolitica serotype O:8 / biotype 1B (strain NCTC 13174 / 8081).